The sequence spans 359 residues: Isopentenyl-diphosphate delta-isomerase (359 aa).

12 to 13 contributes to the substrate binding site; the sequence is RK. Residues Ser-68, 69–71, Ser-99, and Asn-128 each bind FMN; that span reads AMT. 99–101 contacts substrate; the sequence is SQR. Gln-162 is a substrate binding site. Glu-163 is a binding site for Mg(2+). FMN-binding positions include Lys-194, Thr-224, 277–279, and 298–299; these read GIR and AL.

Belongs to the IPP isomerase type 2 family. Homooctamer. Dimer of tetramers. Requires FMN as cofactor. NADPH serves as cofactor. It depends on Mg(2+) as a cofactor.

It localises to the cytoplasm. The catalysed reaction is isopentenyl diphosphate = dimethylallyl diphosphate. Its function is as follows. Involved in the biosynthesis of isoprenoids. Catalyzes the 1,3-allylic rearrangement of the homoallylic substrate isopentenyl (IPP) to its allylic isomer, dimethylallyl diphosphate (DMAPP). In Methanoregula boonei (strain DSM 21154 / JCM 14090 / 6A8), this protein is Isopentenyl-diphosphate delta-isomerase.